Consider the following 524-residue polypeptide: Cytochrome P450 monooxygenase oblB (524 aa).

A run of 3 helical transmembrane segments spans residues 18-38 (ILNAGIAIAGLSAAYAIGLVI), 225-245 (FHSGVVTLPLFMGLPWLIHLI), and 322-342 (VLIGSGTMTTAGTMCFLVYYI). Residue Cys-466 participates in heme binding.

It belongs to the cytochrome P450 family. Heme is required as a cofactor.

Its subcellular location is the membrane. It catalyses the reaction ophiobolin F + 4 reduced [NADPH--hemoprotein reductase] + 4 O2 = ophiobolin C + 4 oxidized [NADPH--hemoprotein reductase] + 6 H2O + 4 H(+). It functions in the pathway secondary metabolite biosynthesis; terpenoid biosynthesis. Functionally, cytochrome P450 monooxygenase; part of the gene cluster that mediates the biosynthesis of the sesterterpenes ophiobolins, fungal phytotoxins with potential anti-cancer activities. The first step of the pathway is performed by the sesterterpene synthase oblA that possesses both prenyl transferase and terpene cyclase activity, converting isopentenyl diphosphate and dimethylallyl diphosphate into geranylfarnesyl diphosphate (GFPP) and further converting GFPP into ophiobolin F, respectively. Other sesterterpenoids (C(25) terpenoids) are found as minor products of oblA. The cytochrome P450 monooxygenase oblB then catalyzes a four-step oxidative transformation of ophiobolin F to yield ophiobolin C. The FAD-dependent oxidoreductase oblC might be involved in a later oxidation step that produces ophiobolin A. The protein is Cytochrome P450 monooxygenase oblB of Cochliobolus heterostrophus (strain C5 / ATCC 48332 / race O) (Southern corn leaf blight fungus).